The following is a 152-amino-acid chain: Calmodulin-like protein 2 (152 aa).

EF-hand domains lie at 1-36 (MDRGELSRVFQMFDKNGDGKIAKNELKDFFKSVGIM), 37-72 (VPENEINEMIAKMDVNGDGAMDIDEFGSLYQEMVEE), 74-109 (EEEEDMREAFRVFDQNGDGFITDEELRSVLASMGLK), and 112-147 (RTLEDCKKMISKVDVDGDGMVNFKEFKQMMRGGGFA). Ca(2+) contacts are provided by Asp-14, Asn-16, Asp-18, Lys-20, Glu-25, Asp-50, Asn-52, Asp-54, Glu-61, Asp-87, Asn-89, Asp-91, Glu-98, Asp-125, Asp-127, Asp-129, Met-131, and Glu-136.

Belongs to the calmodulin family.

Its function is as follows. Potential calcium sensor that is required for pollen tube attraction for ovule fertilization. In Arabidopsis thaliana (Mouse-ear cress), this protein is Calmodulin-like protein 2 (CML2).